Consider the following 412-residue polypeptide: Protein arginine N-methyltransferase 2 (412 aa).

Residues 48-65 (EKNRNGDKEFRESTDDNK) are compositionally biased toward basic and acidic residues. 2 disordered regions span residues 48–69 (EKNRNGDKEFRESTDDNKTSNT) and 169–189 (SVQTAVDGQKEESVGSDDDAT). Ser-181 and Ser-184 each carry phosphoserine. The region spanning 189–412 (TAANQQVYLK…YYYHPRITFA (224 aa)) is the RMT2 domain. S-adenosyl-L-methionine contacts are provided by residues Tyr-196, Met-226, 250 to 255 (FGMGII), 271 to 273 (EAH), 298 to 299 (WQ), and Asp-319.

The protein belongs to the class I-like SAM-binding methyltransferase superfamily. RMT2 methyltransferase family. Monomer. Interacts with nucleoporins NUP49, NUP57 and NUP100.

It localises to the cytoplasm. Its subcellular location is the nucleus. Its function is as follows. S-adenosyl-L-methionine-dependent protein-arginine N-methyltransferase that methylates the delta-nitrogen atom of arginine residues to form N5-methylarginine (type IV) in target proteins. Monomethylates ribosomal protein L12 (RPL12A/RPL12B) at 'Arg-67'. This chain is Protein arginine N-methyltransferase 2, found in Saccharomyces cerevisiae (strain ATCC 204508 / S288c) (Baker's yeast).